The chain runs to 418 residues: EPS I polysaccharide export inner membrane protein EpsF (418 aa).

Helical transmembrane passes span 21 to 41 (VLVV…LPII), 45 to 65 (CAAI…LATA), 142 to 162 (PLLV…IAIY), 170 to 190 (YVVF…GSAI), 222 to 242 (AGTH…VLFL), 262 to 282 (LIVL…EFVM), 296 to 316 (SAWE…AWLL), 326 to 346 (MAFL…PAVG), 347 to 367 (ARLF…FFFA), and 377 to 397 (KTLA…IVSA).

This sequence to S.marcescens SfuB.

It is found in the cell inner membrane. Its function is as follows. Probably involved in polymerization and/or export of exopolysaccharide EPS I which functions as a virulence factor. May play a role in export of EPS I or its intermediates across the membranes. This chain is EPS I polysaccharide export inner membrane protein EpsF (epsF), found in Ralstonia nicotianae (strain ATCC BAA-1114 / GMI1000) (Ralstonia solanacearum).